We begin with the raw amino-acid sequence, 446 residues long: Glucarate dehydratase (446 aa).

Substrate contacts are provided by H32, T103, Y150, and K205. K207 serves as the catalytic Proton acceptor. Residues D235, E266, and N289 each coordinate Mg(2+). Residue 235–237 (DPN) coordinates substrate. Residues N289, 339-341 (HSN), H368, and R422 contribute to the substrate site. Catalysis depends on H339, which acts as the Proton acceptor.

This sequence belongs to the mandelate racemase/muconate lactonizing enzyme family. GlucD subfamily. In terms of assembly, homodimer. Requires Mg(2+) as cofactor.

The enzyme catalyses D-glucarate = 5-dehydro-4-deoxy-D-glucarate + H2O. It functions in the pathway carbohydrate acid metabolism; D-glucarate degradation; 2,5-dioxopentanoate from D-glucarate: step 1/2. Functionally, catalyzes the dehydration of glucarate to 5-keto-4-deoxy-D-glucarate (5-kdGluc). Also acts on L-idarate. In Escherichia coli O157:H7, this protein is Glucarate dehydratase (gudD).